A 137-amino-acid chain; its full sequence is Small ribosomal subunit protein uS12 (137 aa).

2 disordered regions span residues 1-22 (MPTINQLVRKGRKSHKGKSKSP) and 37-57 (KNPSPQKRGVATRVGTMTPKK). Over residues 9 to 19 (RKGRKSHKGKS) the composition is skewed to basic residues. The residue at position 102 (aspartate 102) is a 3-methylthioaspartic acid.

It belongs to the universal ribosomal protein uS12 family. As to quaternary structure, part of the 30S ribosomal subunit. Contacts proteins S8 and S17. May interact with IF1 in the 30S initiation complex.

In terms of biological role, with S4 and S5 plays an important role in translational accuracy. Interacts with and stabilizes bases of the 16S rRNA that are involved in tRNA selection in the A site and with the mRNA backbone. Located at the interface of the 30S and 50S subunits, it traverses the body of the 30S subunit contacting proteins on the other side and probably holding the rRNA structure together. The combined cluster of proteins S8, S12 and S17 appears to hold together the shoulder and platform of the 30S subunit. In Limosilactobacillus fermentum (strain NBRC 3956 / LMG 18251) (Lactobacillus fermentum), this protein is Small ribosomal subunit protein uS12.